The primary structure comprises 162 residues: Endoribonuclease YbeY (162 aa).

Zn(2+) contacts are provided by histidine 130, histidine 134, and histidine 140.

The protein belongs to the endoribonuclease YbeY family. Requires Zn(2+) as cofactor.

It is found in the cytoplasm. Its function is as follows. Single strand-specific metallo-endoribonuclease involved in late-stage 70S ribosome quality control and in maturation of the 3' terminus of the 16S rRNA. The protein is Endoribonuclease YbeY of Nitratidesulfovibrio vulgaris (strain ATCC 29579 / DSM 644 / CCUG 34227 / NCIMB 8303 / VKM B-1760 / Hildenborough) (Desulfovibrio vulgaris).